The primary structure comprises 289 residues: MNSKTHLLLALTMLIWAGSFIFIKIGLKELDPFNLAFYRFLLASPLLMAWVFWKRGLAKPSGSEWLHLSVLALSGVTLLYAFQFLALKYTTATNASILINTSAVFVALWGLVKGEANPRKLAGVFLSFAGVVLIVSKGTLEFFSSKTIFGDVLMIVDGFLWAVYTVLGSKMLLKYDHETLTAYAFALGTIFLIPFALMSGFANPVTFNPETVAALLYLSILCSVFAYVVWYYALTNADSTSVAVYVYLVPLFTAIFAFYALNEKPDFFTAIGGIITIAGVYLTTAKQHQ.

The next 10 helical transmembrane spans lie at 7 to 27, 33 to 53, 65 to 85, 92 to 112, 123 to 143, 148 to 168, 182 to 202, 212 to 232, 241 to 261, and 265 to 285; these read LLLA…KIGL, FNLA…WVFW, WLHL…FQFL, ATNA…WGLV, GVFL…LEFF, IFGD…TVLG, AYAF…SGFA, VAAL…VWYY, SVAV…FYAL, and PDFF…LTTA. EamA domains are found at residues 14–136 and 159–285; these read LIWA…LIVS and FLWA…LTTA.

It belongs to the EamA transporter family.

The protein localises to the cell membrane. This is an uncharacterized protein from Archaeoglobus fulgidus (strain ATCC 49558 / DSM 4304 / JCM 9628 / NBRC 100126 / VC-16).